A 159-amino-acid polypeptide reads, in one-letter code: Ribonuclease H (159 aa).

Residues Met-1 to Arg-145 form the RNase H type-1 domain. Positions 10, 49, 74, and 137 each coordinate Mg(2+).

This sequence belongs to the RNase H family. Monomer. Mg(2+) serves as cofactor.

It is found in the cytoplasm. The catalysed reaction is Endonucleolytic cleavage to 5'-phosphomonoester.. Functionally, endonuclease that specifically degrades the RNA of RNA-DNA hybrids. This Thermosynechococcus vestitus (strain NIES-2133 / IAM M-273 / BP-1) protein is Ribonuclease H.